Reading from the N-terminus, the 569-residue chain is Peroxynitrite isomerase THAP4 (569 aa).

The THAP-type zinc-finger motif lies at 1–85 (MVICCAAVNC…LKPTAVPSIF (85 aa)). Positions 83 to 219 (SIFHLSEKKR…GISMDDFTPP (137 aa)) are disordered. The segment covering 121 to 130 (IGSSLSSSDN) has biased composition (polar residues). Phosphoserine is present on Ser-159. Residues 196-210 (ASSSAADAGGADKSG) show a composition bias toward low complexity. The HCFC1-binding motif (HBM) signature appears at 230 to 233 (LHSY). The residue at position 234 (Ser-234) is a Phosphoserine. The interval 235–312 (FSSKHTRERP…EAVQSEHSDA (78 aa)) is disordered. Residues 242–262 (ERPSVPREPMDRKRLKRDIEP) show a composition bias toward basic and acidic residues. Positions 265 to 279 (SGNSVAQSPPSSSLT) are enriched in polar residues. Positions 280 to 289 (ATPQKASQSP) are enriched in low complexity. Positions 407-569 (PPKLNPVVEP…LHITYKKVTP (163 aa)) are nitrobindin. Thr-436 and His-559 together coordinate heme b.

It in the C-terminal section; belongs to the nitrobindin family. Homodimer. It depends on heme b as a cofactor.

The protein resides in the cytoplasm. The protein localises to the nucleus. It catalyses the reaction peroxynitrite = nitrate. It functions in the pathway nitrogen metabolism. In terms of biological role, heme-binding protein able to scavenge peroxynitrite and to protect free L-tyrosine against peroxynitrite-mediated nitration, by acting as a peroxynitrite isomerase that converts peroxynitrite to nitrate. Therefore, this protein likely plays a role in peroxynitrite sensing and in the detoxification of reactive nitrogen and oxygen species (RNS and ROS, respectively). Is able to bind nitric oxide (NO) in vitro, but may act as a sensor of peroxynitrite levels in vivo, possibly modulating the transcriptional activity residing in the N-terminal region. In Rattus norvegicus (Rat), this protein is Peroxynitrite isomerase THAP4.